Reading from the N-terminus, the 143-residue chain is Large ribosomal subunit protein uL11 (143 aa).

This sequence belongs to the universal ribosomal protein uL11 family. In terms of assembly, part of the ribosomal stalk of the 50S ribosomal subunit. Interacts with L10 and the large rRNA to form the base of the stalk. L10 forms an elongated spine to which L12 dimers bind in a sequential fashion forming a multimeric L10(L12)X complex. Post-translationally, one or more lysine residues are methylated.

Functionally, forms part of the ribosomal stalk which helps the ribosome interact with GTP-bound translation factors. The chain is Large ribosomal subunit protein uL11 from Bordetella parapertussis (strain 12822 / ATCC BAA-587 / NCTC 13253).